A 278-amino-acid chain; its full sequence is 4-deoxy-L-threo-5-hexosulose-uronate ketol-isomerase (278 aa).

4 residues coordinate Zn(2+): histidine 196, histidine 198, glutamate 203, and histidine 245.

Belongs to the KduI family. Zn(2+) serves as cofactor.

The catalysed reaction is 5-dehydro-4-deoxy-D-glucuronate = 3-deoxy-D-glycero-2,5-hexodiulosonate. The protein operates within glycan metabolism; pectin degradation; 2-dehydro-3-deoxy-D-gluconate from pectin: step 4/5. In terms of biological role, catalyzes the isomerization of 5-dehydro-4-deoxy-D-glucuronate to 3-deoxy-D-glycero-2,5-hexodiulosonate. The polypeptide is 4-deoxy-L-threo-5-hexosulose-uronate ketol-isomerase (Yersinia pestis bv. Antiqua (strain Antiqua)).